Reading from the N-terminus, the 351-residue chain is THO complex subunit 3 (351 aa).

Positions 1 to 20 are disordered; the sequence is MAVPAAAMGPSALGQSGPGS. At Ala2 the chain carries N-acetylalanine. WD repeat units follow at residues 53–94, 97–137, 139–178, 180–221, 222–261, and 264–303; these read AHSA…KENN, GHGD…CIAT, NTKG…SKAE, QFKF…QSIN, AHPS…CVRC, and RLDW…KLWE.

It belongs to the THOC3 family. As to quaternary structure, component of the THO subcomplex, which is composed of THOC1, THOC2, THOC3, THOC5, THOC6 and THOC7. The THO subcomplex interacts with DDX39B to form the THO-DDX39B complex which multimerizes into a 28-subunit tetrameric assembly. Component of the transcription/export (TREX) complex at least composed of ALYREF/THOC4, DDX39B, SARNP/CIP29, CHTOP and the THO subcomplex; in the complex interacts with THOC2. TREX seems to have a dynamic structure involving ATP-dependent remodeling.

The protein resides in the nucleus. The protein localises to the nucleus speckle. In terms of biological role, component of the THO subcomplex of the TREX complex which is thought to couple mRNA transcription, processing and nuclear export, and which specifically associates with spliced mRNA and not with unspliced pre-mRNA. Required for efficient export of polyadenylated RNA and spliced mRNA. The THOC1-THOC2-THOC3 core complex alone is sufficient to bind export factor NXF1-NXT1 and promote ATPase activity of DDX39B. TREX is recruited to spliced mRNAs by a transcription-independent mechanism, binds to mRNA upstream of the exon-junction complex (EJC) and is recruited in a splicing- and cap-dependent manner to a region near the 5' end of the mRNA where it functions in mRNA export to the cytoplasm via the TAP/NXF1 pathway. Functionally, (Microbial infection) The TREX complex is essential for the export of Kaposi's sarcoma-associated herpesvirus (KSHV) intronless mRNAs and infectious virus production. In Homo sapiens (Human), this protein is THO complex subunit 3 (THOC3).